The primary structure comprises 195 residues: Probable GTP-binding protein EngB (195 aa).

Residues 22-195 (GLPEIALAGR…WNAILAKINK (174 aa)) form the EngB-type G domain. GTP is bound by residues 30-37 (GRSNVGKS), 57-61 (GKTQT), 75-78 (DVPG), 142-145 (TKAD), and 174-176 (FSS). Mg(2+) is bound by residues Ser37 and Thr59.

Belongs to the TRAFAC class TrmE-Era-EngA-EngB-Septin-like GTPase superfamily. EngB GTPase family. It depends on Mg(2+) as a cofactor.

Functionally, necessary for normal cell division and for the maintenance of normal septation. The polypeptide is Probable GTP-binding protein EngB (Bacillus pumilus (strain SAFR-032)).